A 220-amino-acid chain; its full sequence is Charged multivesicular body protein 2a (220 aa).

The residue at position 1 (M1) is an N-acetylmethionine. Coiled coils occupy residues 12-52 (EELL…KMAK) and 195-220 (RAAE…LRRD). Residues 208–218 (ADLEERLKNLR) carry the MIT-interacting motif motif.

Belongs to the SNF7 family. As to quaternary structure, probable core component of the endosomal sorting required for transport complex III (ESCRT-III). ESCRT-III components are thought to multimerize to form a flat lattice on the perimeter membrane of the endosome.

Its subcellular location is the late endosome membrane. It localises to the cytoplasm. Functionally, probable core component of the endosomal sorting required for transport complex III (ESCRT-III) which is involved in multivesicular bodies (MVBs) formation and sorting of endosomal cargo proteins into MVBs. MVBs contain intraluminal vesicles (ILVs) that are generated by invagination and scission from the limiting membrane of the endosome and mostly are delivered to lysosomes enabling degradation of membrane proteins, such as stimulated growth factor receptors, lysosomal enzymes and lipids. The polypeptide is Charged multivesicular body protein 2a (CHMP2A) (Gallus gallus (Chicken)).